We begin with the raw amino-acid sequence, 253 residues long: Protein C1orf43 homolog (253 aa).

The helical transmembrane segment at 11 to 31 (VNVVLVMAYGSLVFVLLFIFV) threads the bilayer.

The protein localises to the membrane. It localises to the golgi apparatus. The protein resides in the mitochondrion. In terms of biological role, general regulator of phagocytosis. Required to uptake Gram negative bacterium by macrophages. The sequence is that of Protein C1orf43 homolog from Mus musculus (Mouse).